Consider the following 494-residue polypeptide: Syntaphilin (494 aa).

The disordered stretch occupies residues Met1–Tyr75. Positions Gly7–Ser49 are enriched in low complexity. Residues Leu79–Lys161 are a coiled coil. Disordered stretches follow at residues Met191 to Ala246 and Cys338 to Val398. Phosphoserine is present on residues Ser200 and Ser204. Residues Arg207–Lys217 are compositionally biased toward polar residues. Thr214 carries the post-translational modification Phosphothreonine. The residue at position 219 (Ser219) is a Phosphoserine. Over residues Gly230–Ala246 the composition is skewed to low complexity. Positions Ser344–Ala353 are enriched in basic and acidic residues. The chain crosses the membrane as a helical span at residues Tyr425–Cys444.

As to quaternary structure, binds to STX1A. Interacts with DNM1; this interaction inhibits the binding of DNM1 to AMPH and DNM1-receptor-mediated endocytosis. As to expression, brain specific. Found in synapses.

Its subcellular location is the membrane. It is found in the synapse. It localises to the synaptosome. Its function is as follows. Inhibits SNARE complex formation by absorbing free STX1A. This is Syntaphilin from Homo sapiens (Human).